The sequence spans 637 residues: MIVFSSLQIRRGVRVLLDNATATINPGQKVGLVGKNGCGKSTLLALLKNEISADGGSYTFPGSWQLAWVNQETPALPQAALEYVIDGDREYRQLEAQLHDANERNDGHAIATIHGKLDAIDAWSIRSRAASLLHGLGFSNEQLERPVSDFSGGWRMRLNLAQALICRSDLLLLDEPTNHLDLDAVIWLEKWLKSYQGTLILISHDRDFLDPIVDKIIHIEQQSMFEYTGNYSSFEVQRATRLAQQQAMYESQQERVAHLQSYIDRFRAKATKAKQAQSRIKMLERMELIAPAHVDNPFRFSFRAPESLPNPLLKMEKVSAGYGDRIILDSIKLNLVPGSRIGLLGRNGAGKSTLIKLLAGELAPVSGEIGLAKGIKLGYFAQHQLEYLRADESPIQHLARLAPQELEQKLRDYLGGFGFQGDKVTEETRRFSGGEKARLVLALIVWQRPNLLLLDEPTNHLDLDMRQALTEALIEFEGALVVVSHDRHLLRSTTDDLYLVHDRKVEPFDGDLEDYQQWLSDVQKQENQTDEAPKENANSAQARKDQKRREAELRAQTQPLRKEIARLEKEMEKLNAQLAQAEEKLGDSELYDQSRKAELTACLQQQASAKSGLEECEMAWLEAQEQLEQMLLEGQSN.

ABC transporter domains lie at 2 to 246 (IVFS…AQQQ) and 313 to 527 (LKME…KQEN). Residues 34-41 (GKNGCGKS) and 345-352 (GRNGAGKS) each bind ATP. A disordered region spans residues 523–559 (QKQENQTDEAPKENANSAQARKDQKRREAELRAQTQP). Residues 542–553 (ARKDQKRREAEL) show a composition bias toward basic and acidic residues.

Belongs to the ABC transporter superfamily. ABCF family. YheS subfamily.

Genetic data indicate it may be involved in ribosome assembly or function. The chain is Probable ATP-binding protein YheS (yheS) from Escherichia coli O157:H7.